We begin with the raw amino-acid sequence, 106 residues long: Immunity protein CdiI (106 aa).

In terms of assembly, forms a contact-dependent growth inhibition complex of CdiA-CT-NC101, CdiI-NC101 and EF-Tu; the complex is a dimer of heterotrimers.

Its function is as follows. Immunity protein component of a toxin-immunity protein module, which functions as a cellular contact-dependent growth inhibition (CDI) system. CDI modules allow bacteria to communicate with and inhibit the growth of closely related neighboring bacteria in a contact-dependent fashion. Neutralizes the toxic activity of cognate toxin CdiA-NC101 (the C-terminal 154 residue CT fragment). Does not inhibit toxic activity of CdiA from other toxin-immunity modules or strains of E.coli. Mediates dimerization of the ternary CdiA-CT-NC101, CdiI-NC101 and EF-Tu complex; both CdiI molecules contact both EF-Tu molecules. The sequence is that of Immunity protein CdiI from Escherichia coli (strain NC101).